We begin with the raw amino-acid sequence, 352 residues long: Quinolinate synthase (352 aa).

Residues H48 and S69 each contribute to the iminosuccinate site. [4Fe-4S] cluster is bound at residue C114. Residues 140-142 and S157 contribute to the iminosuccinate site; that span reads YAN. C201 is a binding site for [4Fe-4S] cluster. Residues 227–229 and T244 each bind iminosuccinate; that span reads HPE. Residue C298 participates in [4Fe-4S] cluster binding.

Belongs to the quinolinate synthase family. Type 1 subfamily. [4Fe-4S] cluster serves as cofactor.

Its subcellular location is the cytoplasm. The enzyme catalyses iminosuccinate + dihydroxyacetone phosphate = quinolinate + phosphate + 2 H2O + H(+). It participates in cofactor biosynthesis; NAD(+) biosynthesis; quinolinate from iminoaspartate: step 1/1. In terms of biological role, catalyzes the condensation of iminoaspartate with dihydroxyacetone phosphate to form quinolinate. This Pseudomonas putida (strain GB-1) protein is Quinolinate synthase.